Consider the following 254-residue polypeptide: ATP synthase subunit a (254 aa).

Residues 1 to 6 (MAFLIH) constitute a propeptide, removed in mature form. 7 consecutive transmembrane segments (helical) span residues 32 to 52 (LTNL…LHIM), 83 to 103 (IGAA…FILI), 119 to 139 (SIMV…ILGL), 146 to 166 (FFSF…LVPI), 182 to 202 (LFAN…FLAP), 207 to 227 (TFII…IIGL), and 228 to 248 (EIAV…SYLK).

It belongs to the ATPase A chain family. F-type ATPases have 2 components, CF(1) - the catalytic core - and CF(0) - the membrane proton channel. CF(1) has five subunits: alpha(3), beta(3), gamma(1), delta(1), epsilon(1). CF(0) has three main subunits: a, b and c.

It is found in the mitochondrion inner membrane. Mitochondrial membrane ATP synthase (F(1)F(0) ATP synthase or Complex V) produces ATP from ADP in the presence of a proton gradient across the membrane which is generated by electron transport complexes of the respiratory chain. F-type ATPases consist of two structural domains, F(1) - containing the extramembraneous catalytic core and F(0) - containing the membrane proton channel, linked together by a central stalk and a peripheral stalk. During catalysis, ATP synthesis in the catalytic domain of F(1) is coupled via a rotary mechanism of the central stalk subunits to proton translocation. Key component of the proton channel; it may play a direct role in the translocation of protons across the membrane. This is ATP synthase subunit a (ATP6) from Mycosarcoma maydis (Corn smut fungus).